A 226-amino-acid polypeptide reads, in one-letter code: Small ribosomal subunit protein uS5 (226 aa).

The disordered stretch occupies residues 1–71; that stretch reads MEDIKHNKKP…RKNEKRTKSE (71 aa). A compositionally biased stretch (low complexity) spans 24–54; it reads ANPQANHANPNNRSASVNNNSVNNNKKNSSR. Residues 72-135 enclose the S5 DRBM domain; it reads FEEKIVKISR…KMAENNVQKI (64 aa).

Belongs to the universal ribosomal protein uS5 family. Part of the 30S ribosomal subunit. Contacts proteins S4 and S8.

With S4 and S12 plays an important role in translational accuracy. Functionally, located at the back of the 30S subunit body where it stabilizes the conformation of the head with respect to the body. This is Small ribosomal subunit protein uS5 from Mycoplasmoides gallisepticum (strain R(low / passage 15 / clone 2)) (Mycoplasma gallisepticum).